A 116-amino-acid chain; its full sequence is Large ribosomal subunit protein bL19 (116 aa).

The protein belongs to the bacterial ribosomal protein bL19 family.

In terms of biological role, this protein is located at the 30S-50S ribosomal subunit interface and may play a role in the structure and function of the aminoacyl-tRNA binding site. This chain is Large ribosomal subunit protein bL19 (rplS), found in Streptomyces lividans.